A 575-amino-acid polypeptide reads, in one-letter code: Transcription factor collier (575 aa).

The interaction with DNA stretch occupies residues 79–82 (RKSN). Residues 167 to 186 (CRVLLTHEVMCSRCCDKKSC) form a C5-type zinc finger. Interaction with DNA stretches follow at residues 213 to 220 (NCLKNAGN) and 252 to 255 (NNSK). Residues 255–278 (KHGRRAKRLDTTEGTGNTSLSISG) form a disordered region. Positions 266–276 (TEGTGNTSLSI) are enriched in polar residues. The 84-residue stretch at 299 to 382 (PCIKAISPSE…KGSPGRFVYV (84 aa)) folds into the IPT/TIG domain. 2 disordered regions span residues 456–492 (GQWT…GSYG) and 546–575 (AATA…AAAV). Residues 479 to 492 (SSASTPHSSGGSYG) show a composition bias toward low complexity. Residues 546–557 (AATAHPHHHYPH) are compositionally biased toward basic residues. Low complexity predominate over residues 561-575 (PWHNPAVSAATAAAV).

The protein belongs to the COE family. Its expression at the blastoderm stage is restricted to a single stripe of cells corresponding to part of the intercalary and mandibular segment primordia, possibly parasegment O.

Its subcellular location is the nucleus. Functionally, may act as a 'second-level regulator' of head patterning. Required for establishment of the PS(-1)/PS0 parasegmental border and formation of the intercalary segment. Required for expression of the segment polarity genes hedgehog, engrailed and wingless, and the segment-identity genes CAP and collar in the intercalary segment. Required at the onset of the gastrulation for the correct formation of the mandibular segment. This Drosophila melanogaster (Fruit fly) protein is Transcription factor collier (kn).